We begin with the raw amino-acid sequence, 459 residues long: uncharacterized protein (459 aa).

In terms of domain architecture, TRAM spans 6–64; that stretch reads KNKQEKNIIITIKRLGINGEGIGYYKKKIIFIPGALPNEVVVAKIVDRHPHYLEGELVR. Residues Q289, Y318, E339, and D387 each contribute to the S-adenosyl-L-methionine site. C414 (nucleophile) is an active-site residue.

Belongs to the class I-like SAM-binding methyltransferase superfamily. RNA M5U methyltransferase family.

This is an uncharacterized protein from Lactobacillus johnsonii (strain CNCM I-12250 / La1 / NCC 533).